The following is a 420-amino-acid chain: 3-isopropylmalate dehydratase large subunit (420 aa).

[4Fe-4S] cluster contacts are provided by cysteine 300, cysteine 360, and cysteine 363.

It belongs to the aconitase/IPM isomerase family. LeuC type 2 subfamily. As to quaternary structure, heterodimer of LeuC and LeuD. It depends on [4Fe-4S] cluster as a cofactor.

The enzyme catalyses (2R,3S)-3-isopropylmalate = (2S)-2-isopropylmalate. Its pathway is amino-acid biosynthesis; L-leucine biosynthesis; L-leucine from 3-methyl-2-oxobutanoate: step 2/4. In terms of biological role, catalyzes the isomerization between 2-isopropylmalate and 3-isopropylmalate, via the formation of 2-isopropylmaleate. The chain is 3-isopropylmalate dehydratase large subunit from Helicobacter hepaticus (strain ATCC 51449 / 3B1).